A 299-amino-acid chain; its full sequence is Meso-diaminopimelate D-dehydrogenase (299 aa).

Residues 11-14 (YGNI), arginine 36, 67-70 (CTPT), 90-92 (SFD), and 119-123 (AGWDP) each bind NADP(+). Residues aspartate 92, aspartate 122, phenylalanine 146, 152 to 153 (MG), threonine 171, arginine 181, histidine 227, and asparagine 253 contribute to the substrate site.

Belongs to the diaminopimelate dehydrogenase family. Homodimer.

It carries out the reaction meso-2,6-diaminopimelate + NADP(+) + H2O = (S)-2-amino-6-oxoheptanedioate + NH4(+) + NADPH + H(+). The protein operates within amino-acid biosynthesis; L-lysine biosynthesis via DAP pathway; DL-2,6-diaminopimelate from (S)-tetrahydrodipicolinate: step 1/1. In terms of biological role, catalyzes the reversible NADPH-dependent reductive amination of L-2-amino-6-oxopimelate, the acyclic form of L-tetrahydrodipicolinate, to generate the meso compound, D,L-2,6-diaminopimelate. Probably plays a role in lysine biosynthesis. Exhibits a high substrate specificity for meso-2,6-diaminopimelate (m-DAP), since the activity with L,L-2,6-diaminopimelate is less than 5% of the activity observed with m-DAP. Can use NAD(+) only very poorly since the activity observed in the presence of NAD(+) is about 14% of that with NADP(+). This Bacteroides fragilis (strain ATCC 25285 / DSM 2151 / CCUG 4856 / JCM 11019 / LMG 10263 / NCTC 9343 / Onslow / VPI 2553 / EN-2) protein is Meso-diaminopimelate D-dehydrogenase (ddh).